Consider the following 304-residue polypeptide: tRNA uridine(34) hydroxylase (304 aa).

Residues 124–219 enclose the Rhodanese domain; that stretch reads QDEETLLIDT…YLETIPKEES (96 aa). The Cysteine persulfide intermediate role is filled by C179.

Belongs to the TrhO family.

The enzyme catalyses uridine(34) in tRNA + AH2 + O2 = 5-hydroxyuridine(34) in tRNA + A + H2O. Catalyzes oxygen-dependent 5-hydroxyuridine (ho5U) modification at position 34 in tRNAs. This is tRNA uridine(34) hydroxylase from Bartonella quintana (strain Toulouse) (Rochalimaea quintana).